Here is a 155-residue protein sequence, read N- to C-terminus: Ribosome maturation factor RimP (155 aa).

It belongs to the RimP family.

Its subcellular location is the cytoplasm. Required for maturation of 30S ribosomal subunits. This is Ribosome maturation factor RimP from Synechococcus sp. (strain RCC307).